Consider the following 143-residue polypeptide: Histone H2B.2, sperm (143 aa).

The segment at 1 to 52 is disordered; the sequence is MPRSPSKSSPRKGSPRKGSPRKGSPKRGGKGAKRAGKGGRRRNVVKRRRRRR. Short sequence motifs (SPKK motif) lie at residues 4-7, 9-12, 14-17, 19-22, and 24-27; these read SPSK, SPRK, and SPKR. Basic residues predominate over residues 9-52; it reads SPRKGSPRKGSPRKGSPKRGGKGAKRAGKGGRRRNVVKRRRRRR. 3 positions are modified to phosphoserine: serine 14, serine 19, and serine 24. Serine 130 carries O-linked (GlcNAc) serine glycosylation. Residue lysine 138 forms a Glycyl lysine isopeptide (Lys-Gly) (interchain with G-Cter in ubiquitin) linkage.

The protein belongs to the histone H2B family. The nucleosome is a histone octamer containing two molecules each of H2A, H2B, H3 and H4 assembled in one H3-H4 heterotetramer and two H2A-H2B heterodimers. The octamer wraps approximately 147 bp of DNA. Post-translationally, monoubiquitination of Lys-138 gives a specific tag for epigenetic transcriptional activation and is also prerequisite for histone H3 'Lys-4' and 'Lys-79' methylation. In terms of processing, phosphorylated on SPKK motifs 3, 4 and 5; which may regulate DNA binding. Dephosphorylated during maturation of spermatids to mature sperm and rephosphorylated at fertilization. GlcNAcylation at Ser-130 promotes monoubiquitination of Lys-138. It fluctuates in response to extracellular glucose, and associates with transcribed genes. Testis-specific.

The protein resides in the nucleus. It is found in the chromosome. Core component of nucleosome. Nucleosomes wrap and compact DNA into chromatin, limiting DNA accessibility to the cellular machineries which require DNA as a template. Histones thereby play a central role in transcription regulation, DNA repair, DNA replication and chromosomal stability. DNA accessibility is regulated via a complex set of post-translational modifications of histones, also called histone code, and nucleosome remodeling. In Lytechinus pictus (Painted sea urchin), this protein is Histone H2B.2, sperm.